The following is an 891-amino-acid chain: Dynein axonemal intermediate chain 3 (891 aa).

Residues 1-17 (MAPKQKKKTSRGKKRLK) are compositionally biased toward basic residues. Residues 1-22 (MAPKQKKKTSRGKKRLKPVLAA) form a disordered region. 4 WD repeats span residues 395-435 (ESPD…DRIE), 477-533 (GHKK…PLTP), 670-709 (IHDG…GPLL), and 713-753 (CAPK…HEPA). Positions 818-861 (LEYVEQRKKIREQEKKEMELEMAKKKVKTYQKSKEQMQAELKMD) form a coiled coil.

In terms of assembly, interacts with ACTR2; this interaction reduces binding of the Arp2/3 complex to the VCA domain of nucleation promoting factors. Part of the multisubunit axonemal dynein complex formed at least of two heavy chains and a number of intermediate and light chains. Found in a associated with the catalytic heavy chain DNAH2, the intermediate chain DNAI4, and the light chain DYNLT1.

It is found in the cytoplasm. Its function is as follows. Acts as a negative regulator of cell migration, invasion, and metastasis downstream of p53/TP53, through inhibition of Arp2/3 complex-mediated actin polymerization. Via its association with the multisubunit axonemal dynein complex, is potentially involved in the regulation of cilia function. May play a role in osteogenesis of dental tissue-derived mesenchymal stem cells. The protein is Dynein axonemal intermediate chain 3 of Homo sapiens (Human).